The primary structure comprises 74 residues: U3-agatoxin-Ao1f (74 aa).

The signal sequence occupies residues 1-20; the sequence is MRAIISLLLISTMVFGVIEA. Positions 21-34 are excised as a propeptide; that stretch reads VSLEEGLKIFEGER. 4 disulfide bridges follow: cysteine 37–cysteine 53, cysteine 44–cysteine 58, cysteine 52–cysteine 68, and cysteine 60–cysteine 66. Position 72 is an asparagine amide (asparagine 72).

Belongs to the neurotoxin 07 (Beta/delta-agtx) family. 03 (aga-4) subfamily. Aga sub-subfamily. As to expression, expressed by the venom gland.

It is found in the secreted. Functionally, insecticidal neurotoxin that modulates the insect Nav channel (DmNaV1/tipE (para/tipE)) in a unique manner, with both the activation and inactivation processes being affected. The voltage dependence of activation is shifted toward more hyperpolarized potentials (analogous to site 4 toxins) and a non-inactivating persistent sodium current is induced (site 3-like action). Interestingly, both effects take place in a voltage-dependent manner, producing a bell-shaped curve between -80 and 0 mV. In vivo, induces an irreversible spastic paralysis when injected into insects. The sequence is that of U3-agatoxin-Ao1f from Agelena orientalis (Funnel-web spider).